The chain runs to 179 residues: Large ribosomal subunit protein uL10 (179 aa).

It belongs to the universal ribosomal protein uL10 family. As to quaternary structure, part of the ribosomal stalk of the 50S ribosomal subunit. The N-terminus interacts with L11 and the large rRNA to form the base of the stalk. The C-terminus forms an elongated spine to which L12 dimers bind in a sequential fashion forming a multimeric L10(L12)X complex.

Functionally, forms part of the ribosomal stalk, playing a central role in the interaction of the ribosome with GTP-bound translation factors. In Thermotoga petrophila (strain ATCC BAA-488 / DSM 13995 / JCM 10881 / RKU-1), this protein is Large ribosomal subunit protein uL10.